Reading from the N-terminus, the 322-residue chain is RING finger protein 113B (322 aa).

The tract at residues 24–92 is disordered; sequence KPGRKGAAGL…EEAAPESLDV (69 aa). Over residues 46 to 60 the composition is skewed to low complexity; sequence SSSSGDEGDTVAQPP. The C3H1-type zinc-finger motif lies at 190–218; sequence DYQPDICKDYKETGFCGFGDSCKFLHDRS. The RING-type zinc finger occupies 256–294; that stretch reads CFICRQAFQNPVVTKCRHYFCESCALEHFRATPRCYICD.

The protein is RING finger protein 113B (RNF113B) of Homo sapiens (Human).